Here is a 314-residue protein sequence, read N- to C-terminus: MPVRIPDNLPAAGILESENIFVMSETRAANQDIRPMRVLILNLMPNKIETETQLLRLLGNTPLQVGVDLLRIHDKESKHTSVDHMNTFYRDFEDIRNNNYDGLIITGAPLGQIDFKDVVYWDHIREIIDWSQQHVTSVLFLCWAAHAGLYHLYDLHRQLLANKRSGVFNHRRTSDPHPLLRGFDDEFFAPHSRFAEMDIEQIRQHPDLEVLAESDEAGAYIVLSRDNHNVFVMGHPEYQKDTLNEEYVRDVGEGLNPDIPQNYYRQDDPTQDTIVRWHSHGSLLVSNWLNYYVYQLTPYDLSDMNAKTPWESKK.

Cys142 (acyl-thioester intermediate) is an active-site residue. Lys163 and Ser192 together coordinate substrate. His235 acts as the Proton acceptor in catalysis. Glu237 is a catalytic residue. A substrate-binding site is contributed by Arg249.

It belongs to the MetA family.

It localises to the cytoplasm. It carries out the reaction L-homoserine + succinyl-CoA = O-succinyl-L-homoserine + CoA. Its pathway is amino-acid biosynthesis; L-methionine biosynthesis via de novo pathway; O-succinyl-L-homoserine from L-homoserine: step 1/1. In terms of biological role, transfers a succinyl group from succinyl-CoA to L-homoserine, forming succinyl-L-homoserine. The chain is Homoserine O-succinyltransferase from Shewanella frigidimarina (strain NCIMB 400).